The sequence spans 411 residues: Citrate synthase (411 aa).

Catalysis depends on residues His-304 and Asp-363.

Belongs to the citrate synthase family.

It carries out the reaction oxaloacetate + acetyl-CoA + H2O = citrate + CoA + H(+). It participates in carbohydrate metabolism; tricarboxylic acid cycle; isocitrate from oxaloacetate: step 1/2. This chain is Citrate synthase (gltA), found in Rickettsia australis.